We begin with the raw amino-acid sequence, 146 residues long: Large ribosomal subunit protein uL15 (146 aa).

Residues 1-54 are disordered; that stretch reads MTIKLHDLRPAPGSKTPRTRVGRGEGSKGKTAGRGTKGTKARKQVPTTFEGGQM.

This sequence belongs to the universal ribosomal protein uL15 family. Part of the 50S ribosomal subunit.

Functionally, binds to the 23S rRNA. The protein is Large ribosomal subunit protein uL15 of Mycobacterium marinum (strain ATCC BAA-535 / M).